A 391-amino-acid chain; its full sequence is Isochorismate synthase EntC (391 aa).

The Mg(2+) site is built by Thr-140, Thr-142, Val-145, and Asp-146. Lys-147 serves as the catalytic Proton acceptor. Glu-197 serves as the catalytic Proton donor. Gly-214, Ser-215, Glu-241, Ala-303, Arg-347, and Gly-361 together coordinate isochorismate. Glu-241 is a binding site for Mg(2+). Glu-376 is a Mg(2+) binding site. Lys-380 contacts isochorismate.

It belongs to the isochorismate synthase family. In terms of assembly, monomer. Forms a specific pairwise interaction with EntB; this interaction likely facilitates substrate channeling to connect the EntB and EntC active sites. Mg(2+) serves as cofactor.

It carries out the reaction chorismate = isochorismate. Its pathway is siderophore biosynthesis; enterobactin biosynthesis. In terms of biological role, involved in the biosynthesis of the siderophore enterobactin (macrocyclic trimeric lactone of N-(2,3-dihydroxybenzoyl)-serine). Catalyzes the reversible conversion of chorismate to isochorismate. This chain is Isochorismate synthase EntC, found in Escherichia coli O157:H7.